The sequence spans 366 residues: GTPase Obg (366 aa).

The 161-residue stretch at 1–161 (MRFVDEARIQ…FNLRLELKIL (161 aa)) folds into the Obg domain. The segment at 121-148 (SGGRGGKGNEHFKSSTMRAPRFSQPGEP) is disordered. Residues 162-334 (ADAGLIGLPN…LVQELWQVCE (173 aa)) enclose the OBG-type G domain. GTP-binding positions include 168 to 175 (GLPNAGKS), 193 to 197 (FTTLT), 217 to 220 (DIPG), 287 to 290 (NKID), and 315 to 317 (SAR). Mg(2+) contacts are provided by Ser175 and Thr195.

This sequence belongs to the TRAFAC class OBG-HflX-like GTPase superfamily. OBG GTPase family. As to quaternary structure, monomer. Requires Mg(2+) as cofactor.

The protein localises to the cytoplasm. An essential GTPase which binds GTP, GDP and possibly (p)ppGpp with moderate affinity, with high nucleotide exchange rates and a fairly low GTP hydrolysis rate. Plays a role in control of the cell cycle, stress response, ribosome biogenesis and in those bacteria that undergo differentiation, in morphogenesis control. In Desulfovibrio desulfuricans (strain ATCC 27774 / DSM 6949 / MB), this protein is GTPase Obg.